We begin with the raw amino-acid sequence, 63 residues long: Large ribosomal subunit protein uL29 (63 aa).

It belongs to the universal ribosomal protein uL29 family.

In Vibrio parahaemolyticus serotype O3:K6 (strain RIMD 2210633), this protein is Large ribosomal subunit protein uL29.